The following is a 1569-amino-acid chain: Zinc finger protein GLI3 (1569 aa).

2 stretches are compositionally biased toward polar residues: residues 1 to 10 and 416 to 432; these read MEAQSRSTTA and AAQQNKPTSESAVSSTG. Disordered regions lie at residues 1-79 and 414-461; these read MEAQ…STSS and SEAA…DQPD. 5 consecutive C2H2-type zinc fingers follow at residues 485-510, 518-545, 551-575, 581-606, and 612-637; these read TNCHWEGCSREFDTQEQLVHHINNDH, FVCRWLDCSREQKPFKAQYMLVVHMRRH, HKCTFEGCSKAYSRLENLKTHLRSH, YVCEHEGCNKAFSNASDRAKHQNRTH, and YVCKIPGCTKRYTDPSSLRKHVKTVH. Disordered stretches follow at residues 625-731, 899-921, 1202-1228, and 1335-1364; these read DPSS…YTNS, SYDPISTDASRRSSETSQCDGLP, PKSGLSQQRGYQHHTQNNPQAPQQNLD, and SNQTTSGQNGNTTDGTRSFLSTTQNGGEQQ. A compositionally biased stretch (basic and acidic residues) spans 637-653; sequence HGPEAHVTKKQRGDIHP. Residues 663-676 are compositionally biased toward polar residues; that stretch reads SHSQSRSPGQQTQG. A compositionally biased stretch (basic and acidic residues) spans 678 to 704; sequence HGEHKDLSNTTSKHEECLQVRSVKTEK. The segment covering 705-731 has biased composition (polar residues); the sequence is PMSSQPSPGGKSSCSRQQSPISNYTNS. A compositionally biased stretch (low complexity) spans 1335–1350; it reads SNQTTSGQNGNTTDGT. The span at 1352 to 1364 shows a compositional bias: polar residues; that stretch reads SFLSTTQNGGEQQ.

It belongs to the GLI C2H2-type zinc-finger protein family. Phosphorylation is essential for its proteolytic processing. Post-translationally, the repressor form (GLI3R), a C-terminally truncated form is generated from the full-length GLI3 protein (GLI3FL) through proteolytic processing.

The protein resides in the nucleus. It localises to the cytoplasm. Functionally, has a dual function as a transcriptional activator and a repressor of the sonic hedgehog (Shh) pathway, and may play a role in limb development. May bind to the minimal GLI-consensus sequence 5'-GGGTGGTC-3'. Has an essential role in the early embryonic patterning of mesoderm and neuroectoderm. This chain is Zinc finger protein GLI3 (gli3), found in Xenopus laevis (African clawed frog).